We begin with the raw amino-acid sequence, 99 residues long: Integration host factor subunit alpha (99 aa).

Belongs to the bacterial histone-like protein family. Heterodimer of an alpha and a beta chain.

Functionally, this protein is one of the two subunits of integration host factor, a specific DNA-binding protein that functions in genetic recombination as well as in transcriptional and translational control. This chain is Integration host factor subunit alpha, found in Alteromonas mediterranea (strain DSM 17117 / CIP 110805 / LMG 28347 / Deep ecotype).